Reading from the N-terminus, the 1056-residue chain is Kinesin-like protein KIF11 (1056 aa).

The region spanning 18–359 (NIQVVVRCRP…LEYAHRAKNI (342 aa)) is the Kinesin motor domain. 105–112 (GQTGTGKT) contacts ATP. Lysine 146 carries the post-translational modification N6-acetyllysine. 2 coiled-coil regions span residues 364-480 (EVNQ…KEEY) and 736-763 (LEEK…DIVN). Threonine 458 carries the phosphothreonine modification. Lysine 477 participates in a covalent cross-link: Glycyl lysine isopeptide (Lys-Gly) (interchain with G-Cter in SUMO2). At threonine 925 the chain carries Phosphothreonine. Threonine 926 bears the Phosphothreonine; by CDK1 mark. Serine 1033 is subject to Phosphoserine; by NEK6. A Glycyl lysine isopeptide (Lys-Gly) (interchain with G-Cter in ubiquitin) cross-link involves residue lysine 1034.

It belongs to the TRAFAC class myosin-kinesin ATPase superfamily. Kinesin family. BimC subfamily. Interacts with the thyroid hormone receptor in the presence of thyroid hormone. Component of a large chromatin remodeling complex, at least composed of MYSM1, PCAF, RBM10 and KIF11/TRIP5. Interacts (via C-terminus) with the kinase NEK6 in both interphase and mitosis. Interacts with RARRES1 and AGBL2. Interacts with TPX2. Post-translationally, phosphorylated exclusively on serine during S phase, but on both serine and Thr-926 during mitosis, so controlling the association of KIF11 with the spindle apparatus (probably during early prophase). A subset of this protein primarily localized at the spindle pole is phosphorylated by NEK6 during mitosis; phosphorylation is required for mitotic function. In terms of processing, ubiquitinated at Lys-1034 by UHRF1 via 'Lys-63'-linked ubiquitin chains, leading to interaction with spindle assembly factor TPX2, thereby ensuring accurate distribution to the spindles during metaphase.

Its subcellular location is the cytoplasm. It is found in the cytoskeleton. The protein localises to the spindle pole. Motor protein required for establishing a bipolar spindle and thus contributing to chromosome congression during mitosis. Required in non-mitotic cells for transport of secretory proteins from the Golgi complex to the cell surface. The polypeptide is Kinesin-like protein KIF11 (KIF11) (Homo sapiens (Human)).